Reading from the N-terminus, the 667-residue chain is Sorting nexin mvp1 (667 aa).

A disordered region spans residues 221-268 (AGNLHSQQPPKFSVDSSVDDNAITPRKPFSKIPNRLSPSTQPLLSNSR). Residues 224–236 (LHSQQPPKFSVDS) are compositionally biased toward polar residues. The PX domain maps to 279-398 (TSFPASLEMN…RVFFTEPNVF (120 aa)). A 1,2-diacyl-sn-glycero-3-phospho-(1D-myo-inositol-3-phosphate) contacts are provided by R320, S322, and K346. The segment at 574–594 (ANSDESGRNRTFLNRSSKKRA) is disordered.

It belongs to the sorting nexin family. Homodimer. Forms an autoinhibited tetramer consisting of 2 homodimers that self-interact, wherein the membrane-interacting BAR surfaces are sequestered and the PX lipid-binding sites are occluded. Interacts with Vps1.

The protein resides in the cytoplasm. The protein localises to the endosome membrane. Functionally, required for vacuolar protein sorting. Component of the retromer-mediated endosome-to-Golgi retrograde pathway. Required for efficient cargo export from the endosome, promoting Vps1-mediated fission of retromer-coated tubules that bud from the endosome. In Schizosaccharomyces pombe (strain 972 / ATCC 24843) (Fission yeast), this protein is Sorting nexin mvp1 (mvp1).